The primary structure comprises 237 residues: MTNELVYEGKAKRLFKTEEAGVLRVAYKDDATALNGVRKESFAGKGELNNQITSLIFSHLAGAGIESHFIRAISETEQLVKEVSIIPLEVVVRNVMAGSLAKRLGKEEGELIPNAIVEFYYKDDALDDPFINDDHVLYLELATTSEMDIIRQAARSINKVLQELFNQMNITLIDFKLEFGRDATGNILLADEISPDTCRLWDKETNQKLDKDVFRRNIGNLTDVYTEVLNRLKQVQN.

The protein belongs to the SAICAR synthetase family.

The catalysed reaction is 5-amino-1-(5-phospho-D-ribosyl)imidazole-4-carboxylate + L-aspartate + ATP = (2S)-2-[5-amino-1-(5-phospho-beta-D-ribosyl)imidazole-4-carboxamido]succinate + ADP + phosphate + 2 H(+). It functions in the pathway purine metabolism; IMP biosynthesis via de novo pathway; 5-amino-1-(5-phospho-D-ribosyl)imidazole-4-carboxamide from 5-amino-1-(5-phospho-D-ribosyl)imidazole-4-carboxylate: step 1/2. In Listeria monocytogenes serotype 4b (strain CLIP80459), this protein is Phosphoribosylaminoimidazole-succinocarboxamide synthase.